Reading from the N-terminus, the 296-residue chain is Putative S-adenosyl-L-methionine-dependent methyltransferase MAP_3881 (296 aa).

Residues Asp-121 and 150–151 (DL) each bind S-adenosyl-L-methionine.

The protein belongs to the UPF0677 family.

Its function is as follows. Exhibits S-adenosyl-L-methionine-dependent methyltransferase activity. This is Putative S-adenosyl-L-methionine-dependent methyltransferase MAP_3881 from Mycolicibacterium paratuberculosis (strain ATCC BAA-968 / K-10) (Mycobacterium paratuberculosis).